Consider the following 320-residue polypeptide: MRQTKTGILLANLGTPDAPTPEAVKRYLKQFLSDRRVVDTSRLLWWPLLRGVILPLRSPRVAKLYASVWMEDGSPLMVYSRQQQQALAQRLPDTPVALGMSYGSPSLESAVDELLAEHVDHIVVLPLYPQFSCSTVGAVWDELARILARKRSIPGISFIRDYADNHDYINALANSVRASFAKHGESDLLLLSYHGIPQRYADEGDDYPQRCRTTTRELASALGMAPEKVMMTFQSRFGREPWLMPYTDETLKMLGEKGVGHIQVMCPGFAADCLETLEEIAEQNREVFLGAGGKKYEYIPALNATPEHIEMMANLVAAYR.

Fe cation contacts are provided by H194 and E275.

Belongs to the ferrochelatase family. As to quaternary structure, monomer.

It localises to the cytoplasm. It catalyses the reaction heme b + 2 H(+) = protoporphyrin IX + Fe(2+). It participates in porphyrin-containing compound metabolism; protoheme biosynthesis; protoheme from protoporphyrin-IX: step 1/1. Functionally, catalyzes the ferrous insertion into protoporphyrin IX. The chain is Ferrochelatase from Escherichia coli O139:H28 (strain E24377A / ETEC).